The sequence spans 275 residues: F-box only protein 50 (275 aa).

The tract at residues 1–67 (MEEVREGHAL…LPEPAQPSEA (67 aa)) is disordered. Positions 26–62 (PPSPRSPSPPPSPPPLPSPPSLPSPAAPEAPELPEPA) are enriched in pro residues. Phosphoserine occurs at positions 31, 37, and 49. The region spanning 95-273 (LLLRRPLYRN…VTDSSVSVQL (179 aa)) is the FBA domain.

Expressed in the esophagus, oral cavity, skin, tongue and reproductive organs.

Its subcellular location is the cytoplasm. Its function is as follows. Promotes cell proliferation. This chain is F-box only protein 50 (NCCRP1), found in Homo sapiens (Human).